The following is a 521-amino-acid chain: Manganese transporter pdt1 (521 aa).

S42 is subject to Phosphoserine. T43 carries the post-translational modification Phosphothreonine. The next 12 helical transmembrane spans lie at 71-91 (YCKF…PGNY), 104-124 (KLLF…SLCI), 152-172 (VLAE…TAVA), 179-199 (IPLV…LIAW), 210-230 (IFET…AVVL), 233-253 (VHIG…TVFS), 260-280 (SIGI…SGLV), 325-345 (LFTF…AVFY), 373-393 (LFAV…TIAG), 417-437 (IAII…LNQV), 440-460 (ASQV…VMFT), and 495-515 (IVTW…IVWL).

This sequence belongs to the NRAMP family.

Its subcellular location is the endoplasmic reticulum membrane. Functionally, transports manganese ions into the cell. Regulates cell morphogenesis through control of manganese homeostasis. The polypeptide is Manganese transporter pdt1 (pdt1) (Schizosaccharomyces pombe (strain 972 / ATCC 24843) (Fission yeast)).